An 81-amino-acid polypeptide reads, in one-letter code: Fungal defensin micasin (81 aa).

The first 21 residues, 1 to 21 (MQFTKLATILLVSLMGSAAIA), serve as a signal peptide directing secretion. The propeptide occupies 22–43 (APATNNAAVDAAADATPAVEKR). Cystine bridges form between cysteine 47/cysteine 68, cysteine 54/cysteine 76, and cysteine 58/cysteine 78.

This sequence belongs to the invertebrate defensin family.

It localises to the secreted. Its function is as follows. Antibacterial peptide with potent activity against both Gram-positive and Gram-negative bacteria. May kill bacteria via an intracellular action mode to affect protein folding. Does not show effects on tested filamentous fungi or on the yeast S.cerevisiae. Does not act by destroying the membrane integrity, which is consistent with its nonamphiphilic architecture. Acts more rapidly than vancomycin, suggesting it does not act by inhibiting cell-wall biosynthesis. Does not cause hemolysis and has no cytotoxic effect on HEK cells. In vivo, is as efficient as vancomycin to protect mouse peritonitis models from S.aureus and P.aeruginosa infections. The polypeptide is Fungal defensin micasin (Arthroderma otae (Microsporum canis)).